The chain runs to 286 residues: Beta-lactamase SHV-8 (286 aa).

An N-terminal signal peptide occupies residues 1 to 21 (MRYIRLCIISLLATLPLAVHA). Serine 66 acts as the Acyl-ester intermediate in catalysis. Cysteine 73 and cysteine 119 form a disulfide bridge. Residue glutamate 164 is the Proton acceptor of the active site. Residue 230–232 (KTG) coordinates substrate.

This sequence belongs to the class-A beta-lactamase family.

The enzyme catalyses a beta-lactam + H2O = a substituted beta-amino acid. SHV enzymes hydrolyze broad spectrum cephalosporins notably cefotaxime and ceftazidime. This Escherichia coli protein is Beta-lactamase SHV-8 (bla).